Here is a 223-residue protein sequence, read N- to C-terminus: Phosphoribosylformylglycinamidine synthase subunit PurQ (223 aa).

The Glutamine amidotransferase type-1 domain occupies 2–223; sequence KIAVVVFPGS…KSLLKAGVQA (222 aa). The active-site Nucleophile is C86. Catalysis depends on residues H195 and E197.

In terms of assembly, part of the FGAM synthase complex composed of 1 PurL, 1 PurQ and 2 PurS subunits.

The protein localises to the cytoplasm. It catalyses the reaction N(2)-formyl-N(1)-(5-phospho-beta-D-ribosyl)glycinamide + L-glutamine + ATP + H2O = 2-formamido-N(1)-(5-O-phospho-beta-D-ribosyl)acetamidine + L-glutamate + ADP + phosphate + H(+). It carries out the reaction L-glutamine + H2O = L-glutamate + NH4(+). It functions in the pathway purine metabolism; IMP biosynthesis via de novo pathway; 5-amino-1-(5-phospho-D-ribosyl)imidazole from N(2)-formyl-N(1)-(5-phospho-D-ribosyl)glycinamide: step 1/2. Part of the phosphoribosylformylglycinamidine synthase complex involved in the purines biosynthetic pathway. Catalyzes the ATP-dependent conversion of formylglycinamide ribonucleotide (FGAR) and glutamine to yield formylglycinamidine ribonucleotide (FGAM) and glutamate. The FGAM synthase complex is composed of three subunits. PurQ produces an ammonia molecule by converting glutamine to glutamate. PurL transfers the ammonia molecule to FGAR to form FGAM in an ATP-dependent manner. PurS interacts with PurQ and PurL and is thought to assist in the transfer of the ammonia molecule from PurQ to PurL. This is Phosphoribosylformylglycinamidine synthase subunit PurQ from Lactobacillus acidophilus (strain ATCC 700396 / NCK56 / N2 / NCFM).